The sequence spans 103 residues: MHVKKGDKVQVISGKDKGKQGVILAAFPKKNRVIVEGVNIVKKHAKPSQANPQGGIIEKEAPIHVSKVMPLDPKTGEPTRIGYKIVDGKKVRYAKKSGEILDK.

This sequence belongs to the universal ribosomal protein uL24 family. In terms of assembly, part of the 50S ribosomal subunit.

Its function is as follows. One of two assembly initiator proteins, it binds directly to the 5'-end of the 23S rRNA, where it nucleates assembly of the 50S subunit. In terms of biological role, one of the proteins that surrounds the polypeptide exit tunnel on the outside of the subunit. In Geobacillus stearothermophilus (Bacillus stearothermophilus), this protein is Large ribosomal subunit protein uL24.